Here is a 217-residue protein sequence, read N- to C-terminus: 3,4-dihydroxy-2-butanone 4-phosphate synthase (217 aa).

D-ribulose 5-phosphate-binding positions include 37-38 (RE), Asp-42, 150-154 (RRGHT), and Glu-174. Glu-38 provides a ligand contact to Mg(2+). His-153 is a Mg(2+) binding site.

It belongs to the DHBP synthase family. Homodimer. Mg(2+) serves as cofactor. The cofactor is Mn(2+).

It catalyses the reaction D-ribulose 5-phosphate = (2S)-2-hydroxy-3-oxobutyl phosphate + formate + H(+). The protein operates within cofactor biosynthesis; riboflavin biosynthesis; 2-hydroxy-3-oxobutyl phosphate from D-ribulose 5-phosphate: step 1/1. Its function is as follows. Catalyzes the conversion of D-ribulose 5-phosphate to formate and 3,4-dihydroxy-2-butanone 4-phosphate. This is 3,4-dihydroxy-2-butanone 4-phosphate synthase from Syntrophotalea carbinolica (strain DSM 2380 / NBRC 103641 / GraBd1) (Pelobacter carbinolicus).